Here is a 188-residue protein sequence, read N- to C-terminus: Trafficking protein particle complex subunit 5 (188 aa).

The protein belongs to the TRAPP small subunits family. BET3 subfamily. In terms of assembly, part of the multisubunit TRAPP (transport protein particle) complex.

The protein localises to the golgi apparatus. It is found in the cis-Golgi network. The protein resides in the endoplasmic reticulum. Its function is as follows. May play a role in vesicular transport from endoplasmic reticulum to Golgi. This is Trafficking protein particle complex subunit 5 (TRAPPC5) from Gallus gallus (Chicken).